The following is a 963-amino-acid chain: Kinesin-1 heavy chain (963 aa).

Ala-2 carries the post-translational modification N-acetylalanine. Positions 8 to 325 (NIKVMCRFRP…LLFGQRAKTI (318 aa)) constitute a Kinesin motor domain. 85 to 92 (GQTSSGKT) is a binding site for ATP. Lys-213 participates in a covalent cross-link: Glycyl lysine isopeptide (Lys-Gly) (interchain with G-Cter in SUMO2). Positions 329-914 (VCVNVELTAE…AVRSKNMARR (586 aa)) form a coiled coil. The tract at residues 908-963 (SKNMARRGHSAQIAKPIRPGQHPAASPTHPGTVRGGGSFVQNNQPVGLRGGGGKQS) is disordered. Residues 915 to 963 (GHSAQIAKPIRPGQHPAASPTHPGTVRGGGSFVQNNQPVGLRGGGGKQS) form a globular region. Phosphoserine is present on residues Ser-933 and Ser-945. Arg-956 carries the post-translational modification Omega-N-methylarginine.

Belongs to the TRAFAC class myosin-kinesin ATPase superfamily. Kinesin family. Kinesin subfamily. Oligomer composed of two heavy chains and two light chains. Interacts with GRIP1 and PPP1R42. Interacts with SYBU. Interacts with JAKMIP1. Interacts with PLEKHM2. Interacts with ECPAS. Interacts with ZFYVE27. Found in a complex with OGT, RHOT1, RHOT2 and TRAK1. Interacts with APP (via cytoplasmic domain).

It is found in the cytoplasm. Its subcellular location is the cytoskeleton. The protein localises to the cytolytic granule membrane. It localises to the lysosome membrane. Its function is as follows. Microtubule-dependent motor required for normal distribution of mitochondria and lysosomes. May be involved in the mechanisms of growth arrest induced by exposure to DNA-damaging drugs or by cellular senescence. Can induce formation of neurite-like membrane protrusions in non-neuronal cells in a ZFYVE27-dependent manner. Regulates centrosome and nuclear positioning during mitotic entry. During the G2 phase of the cell cycle in a BICD2-dependent manner, antagonizes dynein function and drives the separation of nuclei and centrosomes. Required for anterograde axonal transportation of MAPK8IP3/JIP3 which is essential for MAPK8IP3/JIP3 function in axon elongation. Through binding with PLEKHM2 and ARL8B, directs lysosome movement toward microtubule plus ends. Involved in NK cell-mediated cytotoxicity. Drives the polarization of cytolytic granules and microtubule-organizing centers (MTOCs) toward the immune synapse between effector NK lymphocytes and target cells. The polypeptide is Kinesin-1 heavy chain (Kif5b) (Mus musculus (Mouse)).